Reading from the N-terminus, the 252-residue chain is Triosephosphate isomerase (252 aa).

Residue Asn8–Lys10 coordinates substrate. His95 acts as the Electrophile in catalysis. The active-site Proton acceptor is Glu167. Residues Gly173, Ser212, and Gly233–Gly234 each bind substrate.

The protein belongs to the triosephosphate isomerase family. In terms of assembly, homodimer.

The protein localises to the cytoplasm. It carries out the reaction D-glyceraldehyde 3-phosphate = dihydroxyacetone phosphate. It functions in the pathway carbohydrate biosynthesis; gluconeogenesis. It participates in carbohydrate degradation; glycolysis; D-glyceraldehyde 3-phosphate from glycerone phosphate: step 1/1. Its function is as follows. Involved in the gluconeogenesis. Catalyzes stereospecifically the conversion of dihydroxyacetone phosphate (DHAP) to D-glyceraldehyde-3-phosphate (G3P). The sequence is that of Triosephosphate isomerase from Lawsonia intracellularis (strain PHE/MN1-00).